Here is a 530-residue protein sequence, read N- to C-terminus: Chaperonin GroEL (530 aa).

Residues 30 to 33 (TLGP), K51, 87 to 91 (DGTTT), G415, and D495 contribute to the ATP site.

The protein belongs to the chaperonin (HSP60) family. As to quaternary structure, forms a cylinder of 14 subunits composed of two heptameric rings stacked back-to-back. Interacts with the co-chaperonin GroES.

The protein localises to the cytoplasm. The enzyme catalyses ATP + H2O + a folded polypeptide = ADP + phosphate + an unfolded polypeptide.. Its function is as follows. Together with its co-chaperonin GroES, plays an essential role in assisting protein folding. The GroEL-GroES system forms a nano-cage that allows encapsulation of the non-native substrate proteins and provides a physical environment optimized to promote and accelerate protein folding. The polypeptide is Chaperonin GroEL (Carsonella ruddii (strain PV)).